The primary structure comprises 501 residues: NAD(P)H-quinone oxidoreductase chain 4, chloroplastic (501 aa).

Helical transmembrane passes span F5–L25, T38–L58, I88–V108, L114–S131, L135–M155, F168–L188, A209–I229, H243–I263, A273–A293, I306–D326, G331–G351, L387–T407, I417–M437, and F464–F484.

Belongs to the complex I subunit 4 family.

Its subcellular location is the plastid. The protein localises to the chloroplast thylakoid membrane. It catalyses the reaction a plastoquinone + NADH + (n+1) H(+)(in) = a plastoquinol + NAD(+) + n H(+)(out). The catalysed reaction is a plastoquinone + NADPH + (n+1) H(+)(in) = a plastoquinol + NADP(+) + n H(+)(out). The sequence is that of NAD(P)H-quinone oxidoreductase chain 4, chloroplastic from Dioscorea elephantipes (Elephant's foot yam).